A 218-amino-acid polypeptide reads, in one-letter code: Ras-related protein Rab-42 (218 aa).

The GTP site is built by Ala19, Gly21, Lys22, Thr23, and Thr46. Residues Thr23, Thr46, and Asp70 each contribute to the Mg(2+) site. Positions 73, 130, 132, 160, and 161 each coordinate GTP. 2 S-geranylgeranyl cysteine lipidation sites follow: Cys216 and Cys218.

This sequence belongs to the small GTPase superfamily. Rab family. The cofactor is Mg(2+).

It localises to the membrane. It catalyses the reaction GTP + H2O = GDP + phosphate + H(+). Its activity is regulated as follows. Regulated by guanine nucleotide exchange factors (GEFs) which promote the exchange of bound GDP for free GTP. Regulated by GTPase activating proteins (GAPs) which increase the GTP hydrolysis activity. Inhibited by GDP dissociation inhibitors (GDIs). Functionally, the small GTPases Rab are key regulators of intracellular membrane trafficking, from the formation of transport vesicles to their fusion with membranes. Rabs cycle between an inactive GDP-bound form and an active GTP-bound form that is able to recruit to membranes different sets of downstream effectors directly responsible for vesicle formation, movement, tethering and fusion. The physiological function of RAB42 remains undefined. The chain is Ras-related protein Rab-42 from Homo sapiens (Human).